A 230-amino-acid polypeptide reads, in one-letter code: 3-isopropylmalate dehydratase small subunit (230 aa).

Belongs to the LeuD family. LeuD type 1 subfamily. Heterodimer of LeuC and LeuD.

The enzyme catalyses (2R,3S)-3-isopropylmalate = (2S)-2-isopropylmalate. Its pathway is amino-acid biosynthesis; L-leucine biosynthesis; L-leucine from 3-methyl-2-oxobutanoate: step 2/4. In terms of biological role, catalyzes the isomerization between 2-isopropylmalate and 3-isopropylmalate, via the formation of 2-isopropylmaleate. The polypeptide is 3-isopropylmalate dehydratase small subunit (Bifidobacterium longum (strain DJO10A)).